The primary structure comprises 494 residues: Maintenance of mitochondrial morphology protein 1 (494 aa).

At 1 to 25 the chain is on the lumenal side; it reads MGDDQSLRSTVAENDISANLSFTQG. A helical membrane pass occupies residues 26–46; that stretch reads FLLGQLSVVLLIGAFIKFFIF. At 47–494 the chain is on the cytoplasmic side; that stretch reads GEAPPPPSRG…GTLPGGAAAN (448 aa). Disordered stretches follow at residues 53–99, 278–330, and 395–494; these read PSRG…VPSS, PPLH…KSNV, and RTGV…AAAN. The segment covering 57–67 has biased composition (basic residues); it reads LSHRASTHRRS. Polar residues-rich tracts occupy residues 68 to 81 and 88 to 99; these read NSIYTINPNEGTSR and STSNVLRPVPSS. An SMP-LTD domain is found at 134 to 387; sequence QPESLDWFNV…EPRVQVVGLP (254 aa). Residues 278–290 are compositionally biased toward pro residues; sequence PPLHTPSPSPSPP. Polar residues-rich tracts occupy residues 300–318 and 406–415; these read THPTNGSREPTQEAPNAQE and TGSNAASRSA. The span at 425 to 437 shows a compositional bias: basic and acidic residues; sequence RADDIGREPDGLR.

Belongs to the MMM1 family. Homodimer. Component of the ER-mitochondria encounter structure (ERMES) or MDM complex, composed of mmm1, mdm10, mdm12 and mdm34. A mmm1 homodimer associates with one molecule of mdm12 on each side in a pairwise head-to-tail manner, and the SMP-LTD domains of mmm1 and mdm12 generate a continuous hydrophobic tunnel for phospholipid trafficking.

The protein localises to the endoplasmic reticulum membrane. Component of the ERMES/MDM complex, which serves as a molecular tether to connect the endoplasmic reticulum (ER) and mitochondria. Components of this complex are involved in the control of mitochondrial shape and protein biogenesis, and function in nonvesicular lipid trafficking between the ER and mitochondria. The mdm12-mmm1 subcomplex functions in the major beta-barrel assembly pathway that is responsible for biogenesis of all outer membrane beta-barrel proteins, and acts in a late step after the SAM complex. The mdm10-mdm12-mmm1 subcomplex further acts in the TOM40-specific pathway after the action of the mdm12-mmm1 complex. Essential for establishing and maintaining the structure of mitochondria and maintenance of mtDNA nucleoids. The protein is Maintenance of mitochondrial morphology protein 1 of Aspergillus oryzae (strain ATCC 42149 / RIB 40) (Yellow koji mold).